The following is a 668-amino-acid chain: Transketolase (668 aa).

Residue His-28 coordinates substrate. Residues His-68 and Gly-116 to Leu-118 each bind thiamine diphosphate. Asp-157 lines the Mg(2+) pocket. Residues Gly-158 and Asn-187 each coordinate thiamine diphosphate. Residues Asn-187 and Ile-189 each coordinate Mg(2+). His-263, Arg-358, and Ser-385 together coordinate substrate. His-263 lines the thiamine diphosphate pocket. The active-site Proton donor is Glu-412. Residue Phe-438 coordinates thiamine diphosphate. The substrate site is built by His-462, Asp-470, His-474, and Arg-521.

It belongs to the transketolase family. Homodimer. Mg(2+) is required as a cofactor. Requires thiamine diphosphate as cofactor.

The catalysed reaction is D-sedoheptulose 7-phosphate + D-glyceraldehyde 3-phosphate = aldehydo-D-ribose 5-phosphate + D-xylulose 5-phosphate. In terms of biological role, catalyzes the transfer of a two-carbon ketol group from a ketose donor to an aldose acceptor, likely via a covalent intermediate with the cofactor thiamine pyrophosphate. Can use L-erythrulose as donor and D-ribose-5-phosphate as acceptor substrates, forming glycolaldehyde and D-sedoheptulose-7-phosphate. For synthetic purposes, is able to use hydroxypyruvate (HPA) as donor substrate, making the reaction irreversible due to the release of carbon dioxide, and various aldehydes as acceptor substrates, which leads to the corresponding ketoses. Thus, using hydroxypyruvate as donor and three different aldehydes as acceptors, i.e. glycolaldehyde, D-glyceraldehyde and butyraldehyde, the enzyme stereoselectively forms the corresponding products L-erythrulose, D-xylulose and (3S)-1,3-dihydroxyhexan-2-one, respectively. This chain is Transketolase, found in Geobacillus stearothermophilus (Bacillus stearothermophilus).